A 188-amino-acid chain; its full sequence is Probable manganese efflux pump MntP (188 aa).

5 consecutive transmembrane segments (helical) span residues 3–23, 66–86, 106–128, 143–163, and 168–188; these read ITAT…ASVG, LEWN…RMII, WLLV…GLAF, ATLI…SIIG, and ILGG…HFHG.

Belongs to the MntP (TC 9.B.29) family.

The protein localises to the cell inner membrane. In terms of biological role, probably functions as a manganese efflux pump. In Shigella sonnei (strain Ss046), this protein is Probable manganese efflux pump MntP.